Consider the following 141-residue polypeptide: Protein C19orf12 homolog (141 aa).

The helical transmembrane segment at 33–53 (LVAAAGAFLGGLVGGPPGIAV) threads the bilayer.

The protein belongs to the C19orf12 family.

The protein localises to the mitochondrion. It is found in the mitochondrion membrane. It localises to the endoplasmic reticulum. The protein resides in the cytoplasm. Its subcellular location is the cytosol. The protein is Protein C19orf12 homolog of Xenopus tropicalis (Western clawed frog).